The following is a 71-amino-acid chain: Natterin-P (71 aa).

The signal sequence occupies residues 1–18; that stretch reads MKLLVLLVTLLVLSWTSA. The propeptide occupies 19–45; that stretch reads EDLGDQEILENNEDNNHESELGEPAAQ. A compositionally biased stretch (acidic residues) spans 22 to 31; the sequence is GDQEILENNE. Residues 22-54 are disordered; the sequence is GDQEILENNEDNNHESELGEPAAQHTDDETSQL. C62 and C71 form a disulfide bridge.

It belongs to the natterin family. As to expression, expressed by the venom gland.

Its subcellular location is the secreted. Its activity is regulated as follows. Inhibited by tissue-kallikrein inhibitor TKI and trasylol. Plasma kallikrein inhibitor PKSI527 and classical inhibitors of serine-, metallo-, thiol- or aspartate-peptidases evokes a minor inhibition of the peptide digestion. Shows nociceptive, edema-inducing and kininogenase activity with release of kallidin from low molecular weight kininogen. The cleavage occurs at Met-Lys bonds. In Thalassophryne nattereri (Copper Joe toadfish), this protein is Natterin-P.